The primary structure comprises 813 residues: Probable receptor-like protein kinase At5g39020 (813 aa).

The N-terminal stretch at 1 to 21 is a signal peptide; it reads MNCNVLFLLSVLVSVTAGVTA. Residues 22–437 lie on the Extracellular side of the membrane; that stretch reads AYHPTDVFLF…TPPIKGKPHV (416 aa). Asn46, Asn61, Asn165, Asn202, Asn213, Asn263, Asn286, Asn293, Asn384, and Asn401 each carry an N-linked (GlcNAc...) asparagine glycan. The chain crosses the membrane as a helical span at residues 438–458; that stretch reads LVIILIVVGSVIGLATFIVII. Over 459-813 the chain is Cytoplasmic; that stretch reads MLLIRQMKRK…QTQTLDSTII (355 aa). One can recognise a Protein kinase domain in the interval 496 to 771; the sequence is KSFSHTVGKG…KVVEMIEGSL (276 aa). Residues 502–510 and Lys524 each bind ATP; that span reads VGKGGFGTV. Asp619 serves as the catalytic Proton acceptor. A disordered region spans residues 791–813; sequence ESSSLSDGQEAEKQTQTLDSTII. The span at 804 to 813 shows a compositional bias: polar residues; that stretch reads QTQTLDSTII.

The protein belongs to the protein kinase superfamily. Ser/Thr protein kinase family.

The protein resides in the membrane. The sequence is that of Probable receptor-like protein kinase At5g39020 from Arabidopsis thaliana (Mouse-ear cress).